A 196-amino-acid polypeptide reads, in one-letter code: ATP-dependent Clp protease proteolytic subunit (196 aa).

The Nucleophile role is filled by Ser-98. Residue His-123 is part of the active site.

Belongs to the peptidase S14 family. In terms of assembly, fourteen ClpP subunits assemble into 2 heptameric rings which stack back to back to give a disk-like structure with a central cavity, resembling the structure of eukaryotic proteasomes.

It localises to the cytoplasm. It carries out the reaction Hydrolysis of proteins to small peptides in the presence of ATP and magnesium. alpha-casein is the usual test substrate. In the absence of ATP, only oligopeptides shorter than five residues are hydrolyzed (such as succinyl-Leu-Tyr-|-NHMec, and Leu-Tyr-Leu-|-Tyr-Trp, in which cleavage of the -Tyr-|-Leu- and -Tyr-|-Trp bonds also occurs).. Cleaves peptides in various proteins in a process that requires ATP hydrolysis. Has a chymotrypsin-like activity. Plays a major role in the degradation of misfolded proteins. This Anoxybacillus flavithermus (strain DSM 21510 / WK1) protein is ATP-dependent Clp protease proteolytic subunit.